The sequence spans 443 residues: MRGFSNEIILKRTLTLSDFTLRYHKRGITALQVIKAPSVSNVPVLLSGDNYGYFVMWDLVTKRPITHMEIEGNSHIIAFWWVETTNVLYILSKDSMLRIFELDSSTQRSIDLVRKLSQANKTDHLQWTKIYEMPINTLNFANFIIEAEVKPTKDNKSYRLVCCHTDDSETIDIYQIIEDSTFKLKRPFNNINFPRFLKQQNFLGISKDSKFGIIMRFAKLNDVIFLGYENGFVVGFKITFDEGLQRDIAELVHVSNDHYPNPILDMCVSGDELYSCSTDDFITKYKIPVNLQLETKYLRDDALLIKCPSSLRVSEPSKVHLPLKNIGHIDKVKDDYLVVSSWSGMTIVYNMRTSEVEQTFVKSKNNLVVSDSSMGDLTNGSGSNTESSSKSHNYKVGAMTCLESFDVQSDGLRLGQLRRIKALAKCNWCLIGYEDGTIKLNKI.

WD repeat units lie at residues 23 to 67, 71 to 110, 258 to 295, and 318 to 359; these read YHKR…PITH, EGNS…QRSI, HYPN…QLET, and KVHL…VEQT. Residues 372–391 are disordered; it reads SSMGDLTNGSGSNTESSSKS. A compositionally biased stretch (low complexity) spans 378-391; it reads TNGSGSNTESSSKS.

Belongs to the WD repeat ASA1 family. In terms of assembly, component of the ASTRA chromatin remodeling machinery complex composed of at least RVB1, RVB2, TRA1, TEL2, TTI1 and TTI2.

Its subcellular location is the nucleus. Functionally, component of the ASTRA complex involved in chromatin remodeling. The sequence is that of ASTRA-associated protein 1 (ASA1) from Saccharomyces cerevisiae (strain JAY291) (Baker's yeast).